The following is a 397-amino-acid chain: METCNGLMRKNKRQKVSRNSDWSKLCPDVLRKIYETLRSPVDSHRAKIVCSNWYSVWKTCVKRPLCPLRIIHQGDSPTVGDGNRKLMGFSYNSYCMASSGNWLLMVDRCLKFYIYNLLTKERIDLPSMESKIRGGQVSFKSKSNNYNFGYLVGPSRKDDIVPYDYEAVEWKKSLAVLWVDETTGDYAVAWTFMRQYLFSYIKGDYSWCNLNHNGKSLVLFDMACENNKLYLLTMDHHIKIFNFYGDFLTGEQNLYPFNFVEDPSEYVWKRKIVIRRSGEVLIVLSLKKKVQNEEKLLFYIFKMNLESRKWERVYCIGDEMLIFGRGVTALALEDLDDGIKSNSIYFVGEDVWPDHQEHEHRVSNCGFFDIATSKIEWPKKIYCFINQNQWFVGGVAY.

The region spanning 20–68 is the F-box domain; it reads SDWSKLCPDVLRKIYETLRSPVDSHRAKIVCSNWYSVWKTCVKRPLCPL.

The polypeptide is Putative F-box protein At2g04810 (Arabidopsis thaliana (Mouse-ear cress)).